A 493-amino-acid chain; its full sequence is Glutamate--tRNA ligase (493 aa).

The 'HIGH' region signature appears at 10–20 (PSPTGDPHVGT). The 'KMSKS' region motif lies at 251–255 (KLSKR). Lys-254 is a binding site for ATP.

This sequence belongs to the class-I aminoacyl-tRNA synthetase family. Glutamate--tRNA ligase type 1 subfamily. Monomer.

Its subcellular location is the cytoplasm. The catalysed reaction is tRNA(Glu) + L-glutamate + ATP = L-glutamyl-tRNA(Glu) + AMP + diphosphate. Catalyzes the attachment of glutamate to tRNA(Glu) in a two-step reaction: glutamate is first activated by ATP to form Glu-AMP and then transferred to the acceptor end of tRNA(Glu). This chain is Glutamate--tRNA ligase, found in Pseudomonas savastanoi pv. phaseolicola (strain 1448A / Race 6) (Pseudomonas syringae pv. phaseolicola (strain 1448A / Race 6)).